A 312-amino-acid polypeptide reads, in one-letter code: DNA primase small subunit PriS (312 aa).

Residues D88, D90, and D215 contribute to the active site.

It belongs to the eukaryotic-type primase small subunit family. As to quaternary structure, heterodimer of a small subunit (PriS) and a large subunit (PriL). Requires Mg(2+) as cofactor. The cofactor is Mn(2+).

In terms of biological role, catalytic subunit of DNA primase, an RNA polymerase that catalyzes the synthesis of short RNA molecules used as primers for DNA polymerase during DNA replication. The small subunit contains the primase catalytic core and has DNA synthesis activity on its own. Binding to the large subunit stabilizes and modulates the activity, increasing the rate of DNA synthesis while decreasing the length of the DNA fragments, and conferring RNA synthesis capability. The DNA polymerase activity may enable DNA primase to also catalyze primer extension after primer synthesis. May also play a role in DNA repair. This chain is DNA primase small subunit PriS, found in Pyrobaculum calidifontis (strain DSM 21063 / JCM 11548 / VA1).